The following is a 528-amino-acid chain: DEAD-box ATP-dependent RNA helicase 6 (528 aa).

2 stretches are compositionally biased toward low complexity: residues 1 to 15 (MNNN…PPGI) and 65 to 80 (QQYV…QQQQ). The segment at 1 to 80 (MNNNNNNRGR…GYPQQIQQQQ (80 aa)) is disordered. The Q motif signature appears at 154–182 (NEFEDYFLKRDLLRGIYEKGFEKPSPIQE). Positions 185–355 (IPIALTGSDI…DRYLKKPYII (171 aa)) constitute a Helicase ATP-binding domain. 198–205 (AKNGTGKT) is an ATP binding site. The residue at position 260 (Thr260) is a Phosphothreonine. The short motif at 303–306 (DEAD) is the DEAD box element. A Helicase C-terminal domain is found at 365–525 (GVTQYYAFVE…PIPSLIDKAI (161 aa)).

It belongs to the DEAD box helicase family. DDX6/DHH1 subfamily.

The protein localises to the cytoplasm. The protein resides in the P-body. The enzyme catalyses ATP + H2O = ADP + phosphate + H(+). In terms of biological role, ATP-dependent RNA helicase involved in mRNA turnover, and more specifically in mRNA decapping. This Arabidopsis thaliana (Mouse-ear cress) protein is DEAD-box ATP-dependent RNA helicase 6 (RH6).